The following is a 232-amino-acid chain: uncharacterized protein (232 aa).

7 helical membrane passes run 17–37 (FLAK…VFAY), 54–74 (MSFM…SGAL), 84–104 (ALFL…FMIY), 107–127 (GSIV…SVYG), 138–158 (GSYL…NMFF), 161–181 (SGLN…LTAY), and 203–223 (MAVV…LYLL).

It belongs to the BI1 family.

Its subcellular location is the cell membrane. This is an uncharacterized protein from Borreliella burgdorferi (strain ATCC 35210 / DSM 4680 / CIP 102532 / B31) (Borrelia burgdorferi).